The chain runs to 851 residues: Glutathione transporter 1 (851 aa).

A compositionally biased stretch (polar residues) spans 1 to 14 (MTARNSASIPTSIR). Positions 1–116 (MTARNSASIP…LDNETDSEVE (116 aa)) are disordered. An N-linked (GlcNAc...) asparagine glycan is attached at N32. Over residues 33–68 (LSTKTASKTSLTFRQSSSDESTSSYSGNHHNINIQH) the composition is skewed to low complexity. A compositionally biased stretch (polar residues) spans 74–92 (FRTNSSSFSPNDYSISESP). N77 carries N-linked (GlcNAc...) asparagine glycosylation. Phosphoserine is present on S93. The stretch at 105–134 (VQLDNETDSEVESEVEELERELEAIEDSVY) forms a coiled coil. N109 carries N-linked (GlcNAc...) asparagine glycosylation. The next 2 membrane-spanning stretches (helical) occupy residues 156–176 (TWVLTTIFVIVFAAVNQFFSL) and 179–199 (PALSISFIVAQLILFPLGKLL). N-linked (GlcNAc...) asparagine glycosylation occurs at N256. 4 helical membrane passes run 259–279 (WGYKILIVLTSQMLGYGFAGL), 282–302 (RWIVYPAAMIWPQTLVSTVLF), 333–353 (FFAYVMIGSFVFYWFPGFIFK), and 405–425 (WVICNTFGSVVLIFWIVVPIL). Residues N452 and N464 are each glycosylated (N-linked (GlcNAc...) asparagine). The next 5 membrane-spanning stretches (helical) occupy residues 480–500 (YSMSTALNFAAVTAIFTHCAL), 531–551 (APQWWYATLFIVVFGLTIFTV), 560–580 (VWALIVALLIFIVNFIPQGVL), 592–612 (IITELIGGYILPGKPLANLMI), and 642–662 (ILFFVQLFATILGGITQVAVQ). Residue N691 is glycosylated (N-linked (GlcNAc...) asparagine). A run of 3 helical transmembrane segments spans residues 711 to 731 (YYPLIFFFLIGAVAPFITWGL), 757 to 777 (PATGINYSSWAIVGFIFNYVI), and 791 to 811 (VLAAAMDSGVAVAGVVIFLCV). N-linked (GlcNAc...) asparagine glycosylation is present at N843.

It belongs to the oligopeptide OPT transporter family.

The protein resides in the endoplasmic reticulum membrane. The protein localises to the cell membrane. Its function is as follows. High-affinity glutathione transporter which plays a role in scavenging glutathione from the extracellular environment for the maintenance of sulfur homeostasis. This chain is Glutathione transporter 1 (pgt1), found in Schizosaccharomyces pombe (strain 972 / ATCC 24843) (Fission yeast).